Reading from the N-terminus, the 361-residue chain is Phosphoserine aminotransferase (361 aa).

An L-glutamate-binding site is contributed by Arg-42. Residues 76-77, Trp-102, Thr-153, Asp-173, and Gln-196 each bind pyridoxal 5'-phosphate; that span reads AR. An N6-(pyridoxal phosphate)lysine modification is found at Lys-197. 238–239 is a pyridoxal 5'-phosphate binding site; sequence NT.

It belongs to the class-V pyridoxal-phosphate-dependent aminotransferase family. SerC subfamily. In terms of assembly, homodimer. The cofactor is pyridoxal 5'-phosphate.

It localises to the cytoplasm. It catalyses the reaction O-phospho-L-serine + 2-oxoglutarate = 3-phosphooxypyruvate + L-glutamate. It carries out the reaction 4-(phosphooxy)-L-threonine + 2-oxoglutarate = (R)-3-hydroxy-2-oxo-4-phosphooxybutanoate + L-glutamate. Its pathway is amino-acid biosynthesis; L-serine biosynthesis; L-serine from 3-phospho-D-glycerate: step 2/3. It participates in cofactor biosynthesis; pyridoxine 5'-phosphate biosynthesis; pyridoxine 5'-phosphate from D-erythrose 4-phosphate: step 3/5. Catalyzes the reversible conversion of 3-phosphohydroxypyruvate to phosphoserine and of 3-hydroxy-2-oxo-4-phosphonooxybutanoate to phosphohydroxythreonine. The polypeptide is Phosphoserine aminotransferase (Pectobacterium atrosepticum (strain SCRI 1043 / ATCC BAA-672) (Erwinia carotovora subsp. atroseptica)).